The sequence spans 1171 residues: Structural maintenance of chromosomes protein 2-2 (1171 aa).

One can recognise a Zinc-hook domain in the interval His-2 to Asp-1158. ATP is bound at residue Gly-32 to Ser-39. Residues Arg-172–Asp-510 adopt a coiled-coil conformation. One can recognise an SMC hinge domain in the interval Ser-518–Ala-635. Positions His-674 to Lys-1026 form a coiled coil.

Belongs to the SMC family. SMC2 subfamily. As to quaternary structure, forms a heterodimer with SMC4. Component of the condensin complex, which contains the SMC2 and SMC4 heterodimer, and three non SMC subunits that probably regulate the complex: CAPH, CAPD2 and CAPG. As to expression, highly expressed in roots and young floral buds.

It is found in the nucleus. Central component of the condensin complex, a complex required for conversion of interphase chromatin into mitotic-like condense chromosomes. The condensin complex probably introduces positive supercoils into relaxed DNA in the presence of type I topoisomerases and converts nicked DNA into positive knotted forms in the presence of type II topoisomerases. Also involved in chromosome segregation in meiosis. In Arabidopsis thaliana (Mouse-ear cress), this protein is Structural maintenance of chromosomes protein 2-2 (SMC2-2).